Consider the following 237-residue polypeptide: 4-hydroxy-tetrahydrodipicolinate reductase (237 aa).

Residues Gly11–Met16, Gly92–Thr94, and Gly116–Phe119 contribute to the NAD(+) site. His148 (proton donor/acceptor) is an active-site residue. A (S)-2,3,4,5-tetrahydrodipicolinate-binding site is contributed by His149. The Proton donor role is filled by Lys152. Gly158–Ser159 provides a ligand contact to (S)-2,3,4,5-tetrahydrodipicolinate.

The protein belongs to the DapB family.

It is found in the cytoplasm. It catalyses the reaction (S)-2,3,4,5-tetrahydrodipicolinate + NAD(+) + H2O = (2S,4S)-4-hydroxy-2,3,4,5-tetrahydrodipicolinate + NADH + H(+). The catalysed reaction is (S)-2,3,4,5-tetrahydrodipicolinate + NADP(+) + H2O = (2S,4S)-4-hydroxy-2,3,4,5-tetrahydrodipicolinate + NADPH + H(+). The protein operates within amino-acid biosynthesis; L-lysine biosynthesis via DAP pathway; (S)-tetrahydrodipicolinate from L-aspartate: step 4/4. Its function is as follows. Catalyzes the conversion of 4-hydroxy-tetrahydrodipicolinate (HTPA) to tetrahydrodipicolinate. The polypeptide is 4-hydroxy-tetrahydrodipicolinate reductase (Xylella fastidiosa (strain M12)).